Reading from the N-terminus, the 360-residue chain is Histidinol-phosphate aminotransferase (360 aa).

Position 222 is an N6-(pyridoxal phosphate)lysine (K222).

It belongs to the class-II pyridoxal-phosphate-dependent aminotransferase family. Histidinol-phosphate aminotransferase subfamily. Homodimer. Pyridoxal 5'-phosphate is required as a cofactor.

It carries out the reaction L-histidinol phosphate + 2-oxoglutarate = 3-(imidazol-4-yl)-2-oxopropyl phosphate + L-glutamate. The protein operates within amino-acid biosynthesis; L-histidine biosynthesis; L-histidine from 5-phospho-alpha-D-ribose 1-diphosphate: step 7/9. The sequence is that of Histidinol-phosphate aminotransferase from Listeria innocua serovar 6a (strain ATCC BAA-680 / CLIP 11262).